The primary structure comprises 38 residues: Phi-Lf prophage-derived putative minor coat protein (38 aa).

In Xanthomonas campestris pv. campestris (strain ATCC 33913 / DSM 3586 / NCPPB 528 / LMG 568 / P 25), this protein is Phi-Lf prophage-derived putative minor coat protein (gIX-1).